A 521-amino-acid polypeptide reads, in one-letter code: DEAD-box ATP-dependent RNA helicase 1 (521 aa).

The disordered stretch occupies residues 1–20 (MVVAMATKEEEGGPSSRVPH). The Q motif motif lies at 36-65 (CPVAHLPRLDPRLVKPLQRMGIESFFPVQV). Positions 72–302 (IGPGAFERDI…QLELQHPLLL (231 aa)) constitute a Helicase ATP-binding domain. 85–92 (SPTGSGKT) is an ATP binding site. A DEAD box motif is present at residues 213 to 216 (DETD). One can recognise a Helicase C-terminal domain in the interval 330-480 (SLIVLLQELR…SLPEESVETL (151 aa)). Positions 495 to 507 (LESEATKKSKSGD) are enriched in basic and acidic residues. Residues 495 to 521 (LESEATKKSKSGDKAPNASKRKRTINT) are disordered.

This sequence belongs to the DEAD box helicase family. DDX51/DBP6 subfamily.

It catalyses the reaction ATP + H2O = ADP + phosphate + H(+). This Oryza sativa subsp. japonica (Rice) protein is DEAD-box ATP-dependent RNA helicase 1.